Here is a 344-residue protein sequence, read N- to C-terminus: Holliday junction branch migration complex subunit RuvB (344 aa).

A large ATPase domain (RuvB-L) region spans residues 4 to 184 (QDRIIDANAK…FGIVQRLEFY (181 aa)). ATP-binding positions include Arg24, Gly65, Lys68, Thr69, Thr70, 131–133 (EDF), Arg174, Tyr184, and Arg221. Residue Thr69 participates in Mg(2+) binding. Residues 185–255 (NIEDLTHIVE…IADLALNMLN (71 aa)) form a small ATPAse domain (RuvB-S) region. Positions 258–344 (EHGFDHMDRR…ALKQDSLPGI (87 aa)) are head domain (RuvB-H). Arg294, Arg313, and Arg318 together coordinate DNA.

Belongs to the RuvB family. Homohexamer. Forms an RuvA(8)-RuvB(12)-Holliday junction (HJ) complex. HJ DNA is sandwiched between 2 RuvA tetramers; dsDNA enters through RuvA and exits via RuvB. An RuvB hexamer assembles on each DNA strand where it exits the tetramer. Each RuvB hexamer is contacted by two RuvA subunits (via domain III) on 2 adjacent RuvB subunits; this complex drives branch migration. In the full resolvosome a probable DNA-RuvA(4)-RuvB(12)-RuvC(2) complex forms which resolves the HJ.

Its subcellular location is the cytoplasm. It catalyses the reaction ATP + H2O = ADP + phosphate + H(+). Its function is as follows. The RuvA-RuvB-RuvC complex processes Holliday junction (HJ) DNA during genetic recombination and DNA repair, while the RuvA-RuvB complex plays an important role in the rescue of blocked DNA replication forks via replication fork reversal (RFR). RuvA specifically binds to HJ cruciform DNA, conferring on it an open structure. The RuvB hexamer acts as an ATP-dependent pump, pulling dsDNA into and through the RuvAB complex. RuvB forms 2 homohexamers on either side of HJ DNA bound by 1 or 2 RuvA tetramers; 4 subunits per hexamer contact DNA at a time. Coordinated motions by a converter formed by DNA-disengaged RuvB subunits stimulates ATP hydrolysis and nucleotide exchange. Immobilization of the converter enables RuvB to convert the ATP-contained energy into a lever motion, pulling 2 nucleotides of DNA out of the RuvA tetramer per ATP hydrolyzed, thus driving DNA branch migration. The RuvB motors rotate together with the DNA substrate, which together with the progressing nucleotide cycle form the mechanistic basis for DNA recombination by continuous HJ branch migration. Branch migration allows RuvC to scan DNA until it finds its consensus sequence, where it cleaves and resolves cruciform DNA. The protein is Holliday junction branch migration complex subunit RuvB of Saccharophagus degradans (strain 2-40 / ATCC 43961 / DSM 17024).